The chain runs to 784 residues: Transcription factor kayak (784 aa).

3 stretches are compositionally biased toward low complexity: residues 97 to 106 (QPTQSAYQQQ), 115 to 126 (NNNNNSNNNANM), and 198 to 227 (QQQQ…QQQQ). Disordered stretches follow at residues 97-126 (QPTQ…NANM), 196-231 (YNQQ…HLPT), 358-404 (PGSD…GNGS), and 421-464 (SGRG…KRRI). The span at 365-378 (SNGSWNEGQLNDDQ) shows a compositional bias: polar residues. The span at 380 to 397 (TTDTSSAATDSTSYQNGG) shows a compositional bias: low complexity. A compositionally biased stretch (polar residues) spans 421 to 438 (SGRGSGLAANSTTSNSAT). Residues 459 to 522 (EEKRRIRRER…SQLEYVLQTH (64 aa)) form the bZIP domain. Positions 461-463 (KRR) are basic motif. A leucine-zipper region spans residues 464-471 (IRRERNKL). Position 594 is a phosphoserine (serine 594). Disordered stretches follow at residues 616 to 635 (QDGA…TPAK) and 759 to 784 (PTCS…LVSL).

It belongs to the bZIP family. Fos subfamily. Homodimer. Heterodimer with Jra. The kay-Jra heterodimer binds more stably to the AP-1 site than either of the two proteins alone.

The protein resides in the nucleus. In terms of biological role, developmentally regulated transcription factor AP-1 binds and recognizes the enhancer DNA sequence: 5'-TGA[CG]TCA-3'. May play a role in the function or determination of a particular subset of cells in the developing embryo. It is able to carry out its function either independently of or in conjunction with Jra. In Drosophila mojavensis (Fruit fly), this protein is Transcription factor kayak.